Consider the following 200-residue polypeptide: MEGASEFFFLFSFISHAMMLTGLIGSSSFLEGDGGFFTHSGDDGNHQVLTFIKSSLQTVTQFTFWSLDIILSVTVHVHQRQETVINVQQLVFVSLDNWNFHVVSRWRQIFQLLTSEDINGNQMDFSVTVLTSLRSGHVDNLTWSTLDDNETVLSQGRTLHWVGGGGTSVSSFKGMFFVRHCIYELVFVCVWESMSNWLQK.

Residues 7 to 29 form a helical membrane-spanning segment; sequence FFFLFSFISHAMMLTGLIGSSSF.

It localises to the membrane. This is an uncharacterized protein from Saccharomyces cerevisiae (strain ATCC 204508 / S288c) (Baker's yeast).